We begin with the raw amino-acid sequence, 264 residues long: Mediator of RNA polymerase II transcription subunit 4 (264 aa).

A disordered region spans residues 183–264; sequence LTKLPGQEDG…DLDLFNPDEF (82 aa). Positions 200–225 are enriched in basic and acidic residues; the sequence is NEDKNIVKDAEGAEGEIRQDDKKEDD. A compositionally biased stretch (acidic residues) spans 236–264; sequence AEGDEDKNAGEDEDEAMDSDLDLFNPDEF.

This sequence belongs to the Mediator complex subunit 4 family. As to quaternary structure, component of the Mediator complex.

Its subcellular location is the nucleus. Its function is as follows. Component of the Mediator complex, a coactivator involved in the regulated transcription of nearly all RNA polymerase II-dependent genes. Mediator functions as a bridge to convey information from gene-specific regulatory proteins to the basal RNA polymerase II transcription machinery. Mediator is recruited to promoters by direct interactions with regulatory proteins and serves as a scaffold for the assembly of a functional preinitiation complex with RNA polymerase II and the general transcription factors. This chain is Mediator of RNA polymerase II transcription subunit 4 (MED4), found in Candida glabrata (strain ATCC 2001 / BCRC 20586 / JCM 3761 / NBRC 0622 / NRRL Y-65 / CBS 138) (Yeast).